Here is a 1435-residue protein sequence, read N- to C-terminus: DNA polymerase III PolC-type (1435 aa).

The 157-residue stretch at 420–576 (YVVFDVETTG…YDTEATAYIF (157 aa)) folds into the Exonuclease domain.

This sequence belongs to the DNA polymerase type-C family. PolC subfamily.

The protein resides in the cytoplasm. It carries out the reaction DNA(n) + a 2'-deoxyribonucleoside 5'-triphosphate = DNA(n+1) + diphosphate. Required for replicative DNA synthesis. This DNA polymerase also exhibits 3' to 5' exonuclease activity. This chain is DNA polymerase III PolC-type, found in Staphylococcus aureus.